A 346-amino-acid chain; its full sequence is F(420)H(2) dehydrogenase subunit H (346 aa).

Transmembrane regions (helical) follow at residues 18–38 (GIVG…AVWL), 91–111 (IFML…AVFI), 125–145 (ISVL…FMVA), 170–190 (PLGI…IVDI), 196–216 (LHWN…SLMA), 257–277 (ILGS…PGFI), 284–304 (GIIV…MVII), and 326–346 (LLPL…YLGA).

It belongs to the complex I subunit 1 family. As to quaternary structure, the FPO complex is composed of at least 13 different subunits. FpoA, FpoH, FpoJ, FpoK, FpoL, FpoM and FpoN proteins constitute the membrane sector of the complex.

The protein localises to the cell membrane. It carries out the reaction methanophenazine + reduced coenzyme F420-(gamma-L-Glu)(n) = dihydromethanophenazine + oxidized coenzyme F420-(gamma-L-Glu)(n) + H(+). Functionally, component of the F(420)H(2) dehydrogenase (FPO complex) which is part of the energy-conserving F(420)H(2):heterodisulfide oxidoreductase system. The membrane-bound electron transfer system of the complex plays an important role in the metabolism of methylotrophic methanogens when the organisms grow on methanol or methylamines. Catalyzes the oxidation of methanophenazine to dihydromethanophenazine. It shuttles electrons from F(420)H(2), via FAD and iron-sulfur (Fe-S) centers, to methanophenazine (an electron carrier in the membrane). It couples the redox reaction to proton translocation (for every two electrons transferred, two hydrogen ions are translocated across the cytoplasmic membrane), and thus conserves the redox energy in a proton gradient. This chain is F(420)H(2) dehydrogenase subunit H, found in Methanosarcina barkeri (strain Fusaro / DSM 804).